The primary structure comprises 200 residues: Probable gluconokinase (200 aa).

34–41 (GVSGSGKT) contributes to the ATP binding site.

This sequence belongs to the gluconokinase GntK/GntV family.

The enzyme catalyses D-gluconate + ATP = 6-phospho-D-gluconate + ADP + H(+). It functions in the pathway carbohydrate acid metabolism; D-gluconate degradation. This Dictyostelium discoideum (Social amoeba) protein is Probable gluconokinase.